The sequence spans 436 residues: D-aminoacyl-tRNA deacylase (436 aa).

The protein belongs to the DtdA deacylase family. Monomer. Zn(2+) serves as cofactor.

It carries out the reaction a D-aminoacyl-tRNA + H2O = a tRNA + a D-alpha-amino acid + H(+). It catalyses the reaction glycyl-tRNA(Ala) + H2O = tRNA(Ala) + glycine + H(+). D-aminoacyl-tRNA deacylase with broad substrate specificity. By recycling D-aminoacyl-tRNA to D-amino acids and free tRNA molecules, this enzyme counteracts the toxicity associated with the formation of D-aminoacyl-tRNA entities in vivo. This is D-aminoacyl-tRNA deacylase from Methanoregula boonei (strain DSM 21154 / JCM 14090 / 6A8).